Consider the following 292-residue polypeptide: MRHLITTKDFSNGEILALFKEAKEFLDEKPRTFLEGKSVTTIFFENSTRTQSSFETAARRLGAKVLKLDVSRSSSSKGETLFDTAANLDAMAPSAIVVRHKNSGVPHTLANYTHCPIVNGGDGKHAHPTQALLDLFTIMEHFDYNVKGKKIAIVGDIKNSRVAASNLELLPRFGIDITLVAPPHFMPNYPIKKTNKLKEVIDDVDIIMSLRTQTERHNIPTYASLKDYANDFCISKDLIKDKNLIILHPGPVHRNIDISDDVMADKRCKVLTQVKNGVAIRMAVLKKLILES.

Carbamoyl phosphate-binding residues include R49 and T50. An L-aspartate-binding site is contributed by K77. 3 residues coordinate carbamoyl phosphate: R99, H127, and Q130. Residues R161 and R211 each contribute to the L-aspartate site. G250 and P251 together coordinate carbamoyl phosphate.

Belongs to the aspartate/ornithine carbamoyltransferase superfamily. ATCase family. In terms of assembly, heterododecamer (2C3:3R2) of six catalytic PyrB chains organized as two trimers (C3), and six regulatory PyrI chains organized as three dimers (R2).

The enzyme catalyses carbamoyl phosphate + L-aspartate = N-carbamoyl-L-aspartate + phosphate + H(+). It participates in pyrimidine metabolism; UMP biosynthesis via de novo pathway; (S)-dihydroorotate from bicarbonate: step 2/3. Functionally, catalyzes the condensation of carbamoyl phosphate and aspartate to form carbamoyl aspartate and inorganic phosphate, the committed step in the de novo pyrimidine nucleotide biosynthesis pathway. This Campylobacter lari (strain RM2100 / D67 / ATCC BAA-1060) protein is Aspartate carbamoyltransferase catalytic subunit.